The chain runs to 259 residues: Chymotrypsin-1 (259 aa).

The signal sequence occupies residues 1–17; the sequence is MLRKVFAVVSVLLVVSA. Residues 18–32 constitute a propeptide, activation peptide; the sequence is AKVTKLVLDDNYVNR. One can recognise a Peptidase S1 domain in the interval 33 to 255; the sequence is VVGGEVAKNG…YHDWVRTTMA (223 aa). A disulfide bridge connects residues Cys59 and Cys75. Residues His74 and Asp119 each act as charge relay system in the active site. 2 disulfides stabilise this stretch: Cys182-Cys198 and Cys208-Cys232. Ser212 (charge relay system) is an active-site residue.

The protein belongs to the peptidase S1 family. In terms of tissue distribution, after blood feeding, expression is induced in the midgut epithelium, followed by secretion into the midgut lumen.

It is found in the secreted. It carries out the reaction Preferential cleavage: Tyr-|-Xaa, Trp-|-Xaa, Phe-|-Xaa, Leu-|-Xaa.. The polypeptide is Chymotrypsin-1 (CHYM1) (Anopheles gambiae (African malaria mosquito)).